The sequence spans 187 residues: Probable nicotinate-nucleotide adenylyltransferase (187 aa).

This sequence belongs to the NadD family.

The enzyme catalyses nicotinate beta-D-ribonucleotide + ATP + H(+) = deamido-NAD(+) + diphosphate. It functions in the pathway cofactor biosynthesis; NAD(+) biosynthesis; deamido-NAD(+) from nicotinate D-ribonucleotide: step 1/1. In terms of biological role, catalyzes the reversible adenylation of nicotinate mononucleotide (NaMN) to nicotinic acid adenine dinucleotide (NaAD). The polypeptide is Probable nicotinate-nucleotide adenylyltransferase (Agrobacterium fabrum (strain C58 / ATCC 33970) (Agrobacterium tumefaciens (strain C58))).